Reading from the N-terminus, the 210-residue chain is Ribosomal RNA large subunit methyltransferase E (210 aa).

5 residues coordinate S-adenosyl-L-methionine: Gly-60, Trp-62, Asp-85, Asp-101, and Asp-126. Lys-166 serves as the catalytic Proton acceptor. Over residues 191 to 200 the composition is skewed to basic and acidic residues; it reads KPKASRDKSS. The segment at 191–210 is disordered; sequence KPKASRDKSSETFLVARDLK.

It belongs to the class I-like SAM-binding methyltransferase superfamily. RNA methyltransferase RlmE family.

Its subcellular location is the cytoplasm. It carries out the reaction uridine(2552) in 23S rRNA + S-adenosyl-L-methionine = 2'-O-methyluridine(2552) in 23S rRNA + S-adenosyl-L-homocysteine + H(+). Specifically methylates the uridine in position 2552 of 23S rRNA at the 2'-O position of the ribose in the fully assembled 50S ribosomal subunit. The sequence is that of Ribosomal RNA large subunit methyltransferase E from Bordetella bronchiseptica (strain ATCC BAA-588 / NCTC 13252 / RB50) (Alcaligenes bronchisepticus).